A 216-amino-acid polypeptide reads, in one-letter code: NADH-quinone oxidoreductase subunit C (216 aa).

It belongs to the complex I 30 kDa subunit family. In terms of assembly, NDH-1 is composed of 14 different subunits. Subunits NuoB, C, D, E, F, and G constitute the peripheral sector of the complex.

It localises to the cell inner membrane. The catalysed reaction is a quinone + NADH + 5 H(+)(in) = a quinol + NAD(+) + 4 H(+)(out). In terms of biological role, NDH-1 shuttles electrons from NADH, via FMN and iron-sulfur (Fe-S) centers, to quinones in the respiratory chain. The immediate electron acceptor for the enzyme in this species is believed to be ubiquinone. Couples the redox reaction to proton translocation (for every two electrons transferred, four hydrogen ions are translocated across the cytoplasmic membrane), and thus conserves the redox energy in a proton gradient. The protein is NADH-quinone oxidoreductase subunit C of Francisella tularensis subsp. holarctica (strain FTNF002-00 / FTA).